The following is a 124-amino-acid chain: uncharacterized protein (124 aa).

Basic residues predominate over residues 62 to 72 (KKNKKQTFLKH). The interval 62–86 (KKNKKQTFLKHHQSDDHSENKVYKS) is disordered. The segment covering 73 to 83 (HQSDDHSENKV) has biased composition (basic and acidic residues). Residues 80-112 (ENKVYKSKKLEKKIQQLNKKKQLIDTKINFLKE) adopt a coiled-coil conformation.

This is an uncharacterized protein from Dictyostelium discoideum (Social amoeba).